Here is a 421-residue protein sequence, read N- to C-terminus: MSGKDVNVFEMAQSQVKNACDKLGMEPAVYELLKEPMRVIEVSIPVKMDDGSIKTFKGFRSQHNDAVGPTKGGIRFHQNVSRDEVKALSIWMTFKCSVTGIPYGGGKGGIIVDPSTLSQGELERLSRGYIDGIYKLIGEKVDVPAPDVNTNGQIMSWMVDEYNKLTGQSSIGVITGKPVEFGGSLGRTAATGFGVAVTAREAAAKLGIDMKKAKIAVQGIGNVGSYTVLNCEKLGGTVVAMAEWCKSEGSYAIYNENGLDGQAMLDYMKEHGNLLNFPGAKRISLEEFWASDVDIVIPAALENSITKEVAESIKAKLVCEAANGPTTPEADEVFAERGIVLTPDILTNAGGVTVSYFEWVQNLYGYYWSEEEVEQKEEIAMVKAFESIWKIKEEYNVTMREAAYMHSIKKVAEAMKLRGWY.

Lys71 and Lys95 together coordinate substrate. Lys107 functions as the Proton donor in the catalytic mechanism. NAD(+)-binding residues include Thr191 and Asn222. Residue Ser355 coordinates substrate.

This sequence belongs to the Glu/Leu/Phe/Val dehydrogenases family. As to quaternary structure, homohexamer.

The enzyme catalyses L-glutamate + NAD(+) + H2O = 2-oxoglutarate + NH4(+) + NADH + H(+). The polypeptide is NAD-specific glutamate dehydrogenase (gluD) (Clostridioides difficile (Peptoclostridium difficile)).